We begin with the raw amino-acid sequence, 95 residues long: Co-chaperonin GroES (95 aa).

The segment at 36 to 55 is disordered; the sequence is QEGEVVAVGSGKTLDDGSKV.

The protein belongs to the GroES chaperonin family. As to quaternary structure, heptamer of 7 subunits arranged in a ring. Interacts with the chaperonin GroEL.

The protein resides in the cytoplasm. Its function is as follows. Together with the chaperonin GroEL, plays an essential role in assisting protein folding. The GroEL-GroES system forms a nano-cage that allows encapsulation of the non-native substrate proteins and provides a physical environment optimized to promote and accelerate protein folding. GroES binds to the apical surface of the GroEL ring, thereby capping the opening of the GroEL channel. The chain is Co-chaperonin GroES from Natranaerobius thermophilus (strain ATCC BAA-1301 / DSM 18059 / JW/NM-WN-LF).